The following is a 422-amino-acid chain: UDP-N-acetylglucosamine 1-carboxyvinyltransferase (422 aa).

Phosphoenolpyruvate is bound at residue 23–24; it reads KN. Arg92 serves as a coordination point for UDP-N-acetyl-alpha-D-glucosamine. The active-site Proton donor is the Cys116. Cys116 is subject to 2-(S-cysteinyl)pyruvic acid O-phosphothioketal. UDP-N-acetyl-alpha-D-glucosamine-binding positions include 121 to 125, 161 to 164, Asp306, and Ile328; these read RPVDL and KVSV.

Belongs to the EPSP synthase family. MurA subfamily.

The protein resides in the cytoplasm. It carries out the reaction phosphoenolpyruvate + UDP-N-acetyl-alpha-D-glucosamine = UDP-N-acetyl-3-O-(1-carboxyvinyl)-alpha-D-glucosamine + phosphate. It functions in the pathway cell wall biogenesis; peptidoglycan biosynthesis. Cell wall formation. Adds enolpyruvyl to UDP-N-acetylglucosamine. This Aliivibrio salmonicida (strain LFI1238) (Vibrio salmonicida (strain LFI1238)) protein is UDP-N-acetylglucosamine 1-carboxyvinyltransferase.